A 175-amino-acid polypeptide reads, in one-letter code: Large ribosomal subunit protein uL10 (175 aa).

Belongs to the universal ribosomal protein uL10 family. As to quaternary structure, part of the ribosomal stalk of the 50S ribosomal subunit. The N-terminus interacts with L11 and the large rRNA to form the base of the stalk. The C-terminus forms an elongated spine to which L12 dimers bind in a sequential fashion forming a multimeric L10(L12)X complex.

Forms part of the ribosomal stalk, playing a central role in the interaction of the ribosome with GTP-bound translation factors. This chain is Large ribosomal subunit protein uL10, found in Mycobacterium sp. (strain JLS).